The sequence spans 273 residues: Tyrosinase (273 aa).

The signal sequence occupies residues 1-18; it reads MLLFTMGLLLAILQPSTG. N-linked (GlcNAc...) asparagine glycans are attached at residues Asn86, Asn111, and Asn161. Residues His180, His202, and His211 each coordinate Cu cation. Asn230 carries N-linked (GlcNAc...) asparagine glycosylation.

Belongs to the tyrosinase family. The cofactor is Cu(2+).

It is found in the melanosome membrane. Its subcellular location is the melanosome. It catalyses the reaction 2 L-dopa + O2 = 2 L-dopaquinone + 2 H2O. The enzyme catalyses L-tyrosine + O2 = L-dopaquinone + H2O. In terms of biological role, this is a copper-containing oxidase that functions in the formation of pigments such as melanins and other polyphenolic compounds. Catalyzes the initial and rate limiting step in the cascade of reactions leading to melanin production from tyrosine. In addition to hydroxylating tyrosine to DOPA (3,4-dihydroxyphenylalanine), also catalyzes the oxidation of DOPA to DOPA-quinone, and possibly the oxidation of DHI (5,6-dihydroxyindole) to indole-5,6 quinone. This is Tyrosinase (TYR) from Coturnix japonica (Japanese quail).